The chain runs to 336 residues: Holliday junction branch migration complex subunit RuvB (336 aa).

The interval 4 to 185 is large ATPase domain (RuvB-L); sequence MDERLLSGES…FGVLSRLEYY (182 aa). Residues L24, R25, G66, K69, T70, T71, 132–134, R175, Y185, and R222 each bind ATP; that span reads EDF. Mg(2+) is bound at residue T70. The segment at 186–256 is small ATPAse domain (RuvB-S); that stretch reads TVDQLSAIVE…ITQMALELLQ (71 aa). A head domain (RuvB-H) region spans residues 259-336; sequence KLGLDHIDHK…EHFGMEMPKV (78 aa). The DNA site is built by R314 and R319.

The protein belongs to the RuvB family. Homohexamer. Forms an RuvA(8)-RuvB(12)-Holliday junction (HJ) complex. HJ DNA is sandwiched between 2 RuvA tetramers; dsDNA enters through RuvA and exits via RuvB. An RuvB hexamer assembles on each DNA strand where it exits the tetramer. Each RuvB hexamer is contacted by two RuvA subunits (via domain III) on 2 adjacent RuvB subunits; this complex drives branch migration. In the full resolvosome a probable DNA-RuvA(4)-RuvB(12)-RuvC(2) complex forms which resolves the HJ.

Its subcellular location is the cytoplasm. The enzyme catalyses ATP + H2O = ADP + phosphate + H(+). Functionally, the RuvA-RuvB-RuvC complex processes Holliday junction (HJ) DNA during genetic recombination and DNA repair, while the RuvA-RuvB complex plays an important role in the rescue of blocked DNA replication forks via replication fork reversal (RFR). RuvA specifically binds to HJ cruciform DNA, conferring on it an open structure. The RuvB hexamer acts as an ATP-dependent pump, pulling dsDNA into and through the RuvAB complex. RuvB forms 2 homohexamers on either side of HJ DNA bound by 1 or 2 RuvA tetramers; 4 subunits per hexamer contact DNA at a time. Coordinated motions by a converter formed by DNA-disengaged RuvB subunits stimulates ATP hydrolysis and nucleotide exchange. Immobilization of the converter enables RuvB to convert the ATP-contained energy into a lever motion, pulling 2 nucleotides of DNA out of the RuvA tetramer per ATP hydrolyzed, thus driving DNA branch migration. The RuvB motors rotate together with the DNA substrate, which together with the progressing nucleotide cycle form the mechanistic basis for DNA recombination by continuous HJ branch migration. Branch migration allows RuvC to scan DNA until it finds its consensus sequence, where it cleaves and resolves cruciform DNA. In Bacillus thuringiensis (strain Al Hakam), this protein is Holliday junction branch migration complex subunit RuvB.